Reading from the N-terminus, the 179-residue chain is Inner membrane-spanning protein YciB (179 aa).

Transmembrane regions (helical) follow at residues 22 to 42 (IYAA…YSWV), 50 to 70 (MALI…FFHN), 76 to 96 (WKVT…QWVM), 121 to 141 (LAWA…AFWL), and 149 to 169 (FKVF…GIYI).

It belongs to the YciB family.

The protein localises to the cell inner membrane. Plays a role in cell envelope biogenesis, maintenance of cell envelope integrity and membrane homeostasis. This chain is Inner membrane-spanning protein YciB, found in Escherichia coli O127:H6 (strain E2348/69 / EPEC).